A 337-amino-acid polypeptide reads, in one-letter code: Beta-hexosaminidase (337 aa).

Residues Asp62, Arg70, Arg133, and 163 to 164 (KH) each bind substrate. Residue His176 is the Proton donor/acceptor of the active site. The active-site Nucleophile is Asp248.

The protein belongs to the glycosyl hydrolase 3 family. NagZ subfamily.

Its subcellular location is the cytoplasm. The enzyme catalyses Hydrolysis of terminal non-reducing N-acetyl-D-hexosamine residues in N-acetyl-beta-D-hexosaminides.. Its pathway is cell wall biogenesis; peptidoglycan recycling. Plays a role in peptidoglycan recycling by cleaving the terminal beta-1,4-linked N-acetylglucosamine (GlcNAc) from peptide-linked peptidoglycan fragments, giving rise to free GlcNAc, anhydro-N-acetylmuramic acid and anhydro-N-acetylmuramic acid-linked peptides. This Psychromonas ingrahamii (strain DSM 17664 / CCUG 51855 / 37) protein is Beta-hexosaminidase.